A 351-amino-acid chain; its full sequence is Dihydroorotate dehydrogenase (quinone) (351 aa).

FMN is bound by residues 61–65 (AGLDK) and T85. Position 65 (K65) interacts with substrate. 110-114 (NRMGF) lines the substrate pocket. FMN is bound by residues N139 and N172. N172 contacts substrate. S175 functions as the Nucleophile in the catalytic mechanism. N177 provides a ligand contact to substrate. 2 residues coordinate FMN: K217 and T245. A substrate-binding site is contributed by 246 to 247 (NT). FMN-binding positions include G268, G297, and 318 to 319 (YS).

The protein belongs to the dihydroorotate dehydrogenase family. Type 2 subfamily. Monomer. It depends on FMN as a cofactor.

The protein resides in the cell membrane. It catalyses the reaction (S)-dihydroorotate + a quinone = orotate + a quinol. The protein operates within pyrimidine metabolism; UMP biosynthesis via de novo pathway; orotate from (S)-dihydroorotate (quinone route): step 1/1. In terms of biological role, catalyzes the conversion of dihydroorotate to orotate with quinone as electron acceptor. This Xanthomonas oryzae pv. oryzae (strain MAFF 311018) protein is Dihydroorotate dehydrogenase (quinone).